A 195-amino-acid polypeptide reads, in one-letter code: CASP-like protein 1B1 (195 aa).

Topologically, residues 1–22 are cytoplasmic; it reads MGLQNEEKLELGCTGLQPKPKK. A helical membrane pass occupies residues 23–43; the sequence is WVLLMVRVVAFLATAAATLVM. The Extracellular portion of the chain corresponds to 44–75; the sequence is ALNKETKTLVVATVGNTPIKVTLTAKFQHTPA. Residues 76–96 traverse the membrane as a helical segment; the sequence is FVFFVIANGMASFHNLLMIMV. Residues 97 to 109 lie on the Cytoplasmic side of the membrane; it reads ELCGQKLDYKGMR. Residues 110 to 130 form a helical membrane-spanning segment; that stretch reads LAMVAILDMMTVALVSGGASA. The Extracellular segment spans residues 131-163; that stretch reads ATFMAELGKNGNSHARWDKICDKFETFCDHGGA. Residues 164 to 184 form a helical membrane-spanning segment; sequence ALIASSAGLILMMIISVMSIM. Topologically, residues 185–195 are cytoplasmic; sequence KLLIKPKSDSS.

This sequence belongs to the Casparian strip membrane proteins (CASP) family. As to quaternary structure, homodimer and heterodimers.

Its subcellular location is the cell membrane. This chain is CASP-like protein 1B1, found in Populus trichocarpa (Western balsam poplar).